The sequence spans 314 residues: Olfactory receptor 14A2 (314 aa).

The Extracellular portion of the chain corresponds to 1 to 26 (MANVTLVTGFLLMGFSNIQKLRILYG). N-linked (GlcNAc...) asparagine glycosylation is present at Asn-3. The chain crosses the membrane as a helical span at residues 27 to 47 (VLFLLIYLAALMSNLLIITLI). At 48-55 (TLDVKLQT) the chain is on the cytoplasmic side. Residues 56–76 (PMYFFLKNLSFLDVFLVSVPI) form a helical membrane-spanning segment. The Extracellular segment spans residues 77 to 91 (PKFIVNNLTHNNSIS). A glycan (N-linked (GlcNAc...) asparagine) is linked at Asn-83. A helical transmembrane segment spans residues 92-112 (ILGCAFQLLLMTSFSAGEIFI). Cys-95 and Cys-177 are disulfide-bonded. Topologically, residues 113–136 (LTAMSYDRYVAICCPLNYEVIMNT) are cytoplasmic. A helical transmembrane segment spans residues 137–157 (GVCVLMASVSWAIGGLFGTAY). Residues 158 to 193 (TAGTFSMPFCGSSVIPQFFCDVPSLLRISCSETLMV) are Extracellular-facing. A helical membrane pass occupies residues 194 to 214 (IYAGIGVGACLSISCFICIVI). Residues 215 to 237 (SYIYIFSTVLKIPTTKGQSKAFS) are Cytoplasmic-facing. The chain crosses the membrane as a helical span at residues 238–258 (TCFPHLTVFTVFIITAYFVYL). Topologically, residues 259 to 267 (KPPSNSPSV) are extracellular. Residues 268–290 (IDRLLSVIYTVMPPVFNPVTYSL) traverse the membrane as a helical segment. At 291–314 (RNNDMKCALIRLLQKTYGQEAYFI) the chain is on the cytoplasmic side.

This sequence belongs to the G-protein coupled receptor 1 family.

The protein localises to the cell membrane. In terms of biological role, odorant receptor. The chain is Olfactory receptor 14A2 (OR14A2) from Homo sapiens (Human).